A 252-amino-acid chain; its full sequence is UPF0246 protein LJ_0535 (252 aa).

Belongs to the UPF0246 family.

The sequence is that of UPF0246 protein LJ_0535 from Lactobacillus johnsonii (strain CNCM I-12250 / La1 / NCC 533).